The chain runs to 241 residues: Triosephosphate isomerase (241 aa).

Substrate is bound at residue 9-11 (NWK). The active-site Electrophile is His96. Glu165 acts as the Proton acceptor in catalysis. Substrate contacts are provided by residues Gly171, Ser204, and 225 to 226 (GG).

This sequence belongs to the triosephosphate isomerase family. Homodimer.

The protein localises to the cytoplasm. The enzyme catalyses D-glyceraldehyde 3-phosphate = dihydroxyacetone phosphate. It participates in carbohydrate biosynthesis; gluconeogenesis. Its pathway is carbohydrate degradation; glycolysis; D-glyceraldehyde 3-phosphate from glycerone phosphate: step 1/1. In terms of biological role, involved in the gluconeogenesis. Catalyzes stereospecifically the conversion of dihydroxyacetone phosphate (DHAP) to D-glyceraldehyde-3-phosphate (G3P). The chain is Triosephosphate isomerase from Prochlorococcus marinus subsp. pastoris (strain CCMP1986 / NIES-2087 / MED4).